The following is a 213-amino-acid chain: Octanoyltransferase (213 aa).

Residues 32 to 207 form the BPL/LPL catalytic domain; it reads DSTLDEIWLV…NILALLNNPD (176 aa). Residues 71-78, 138-140, and 151-153 each bind substrate; these read RGGQVTYH, SLG, and GLA. Catalysis depends on Cys-169, which acts as the Acyl-thioester intermediate.

It belongs to the LipB family.

Its subcellular location is the cytoplasm. The catalysed reaction is octanoyl-[ACP] + L-lysyl-[protein] = N(6)-octanoyl-L-lysyl-[protein] + holo-[ACP] + H(+). The protein operates within protein modification; protein lipoylation via endogenous pathway; protein N(6)-(lipoyl)lysine from octanoyl-[acyl-carrier-protein]: step 1/2. Functionally, catalyzes the transfer of endogenously produced octanoic acid from octanoyl-acyl-carrier-protein onto the lipoyl domains of lipoate-dependent enzymes. Lipoyl-ACP can also act as a substrate although octanoyl-ACP is likely to be the physiological substrate. This chain is Octanoyltransferase, found in Escherichia coli O8 (strain IAI1).